Reading from the N-terminus, the 243-residue chain is Probable heat shock transcription factor (243 aa).

The DNA-binding element occupies 9-102 (INKFIRRLYK…GDNLLPCIQR (94 aa)). The segment at 121 to 164 (QLQDLLQYLNNQNFKLEGEIKSLKDRVDQQDCTINGLVQLLTRI) is involved in trimerization.

It belongs to the HSF family. Homotrimer. Homotrimerization increases the affinity of HSF1 to DNA.

It localises to the nucleus. Functionally, DNA-binding transcription factor that specifically binds heat shock promoter elements (HSE) and activates transcription. This chain is Probable heat shock transcription factor, found in Vairimorpha ceranae (strain BRL01) (Microsporidian parasite).